A 418-amino-acid chain; its full sequence is Probable serine hydroxymethyltransferase (418 aa).

(6S)-5,6,7,8-tetrahydrofolate is bound by residues Leu118 and 122-124 (GHL). At Lys226 the chain carries N6-(pyridoxal phosphate)lysine. (6S)-5,6,7,8-tetrahydrofolate is bound at residue 351 to 353 (SPF).

The protein belongs to the SHMT family. In terms of assembly, homodimer. It depends on pyridoxal 5'-phosphate as a cofactor.

The protein resides in the cytoplasm. It carries out the reaction (6R)-5,10-methylene-5,6,7,8-tetrahydrofolate + glycine + H2O = (6S)-5,6,7,8-tetrahydrofolate + L-serine. The protein operates within one-carbon metabolism; tetrahydrofolate interconversion. In terms of biological role, catalyzes the reversible interconversion of serine and glycine with tetrahydrofolate (THF) serving as the one-carbon carrier. This reaction serves as the major source of one-carbon groups required for the biosynthesis of purines, thymidylate, methionine, and other important biomolecules. In Mesomycoplasma hyopneumoniae (strain 232) (Mycoplasma hyopneumoniae), this protein is Probable serine hydroxymethyltransferase.